Here is a 642-residue protein sequence, read N- to C-terminus: Threonine--tRNA ligase (642 aa).

Residues 1-61 (MPVITLPDGS…ETDSELSIIT (61 aa)) form the TGS domain. The segment at 243–534 (DHRKIGKQLD…LIEEYAGKFP (292 aa)) is catalytic. Residues cysteine 334, histidine 385, and histidine 511 each coordinate Zn(2+).

This sequence belongs to the class-II aminoacyl-tRNA synthetase family. Homodimer. Requires Zn(2+) as cofactor.

It localises to the cytoplasm. The enzyme catalyses tRNA(Thr) + L-threonine + ATP = L-threonyl-tRNA(Thr) + AMP + diphosphate + H(+). In terms of biological role, catalyzes the attachment of threonine to tRNA(Thr) in a two-step reaction: L-threonine is first activated by ATP to form Thr-AMP and then transferred to the acceptor end of tRNA(Thr). Also edits incorrectly charged L-seryl-tRNA(Thr). This Shewanella halifaxensis (strain HAW-EB4) protein is Threonine--tRNA ligase.